A 263-amino-acid chain; its full sequence is 3'-5' ssDNA/RNA exonuclease TatD (263 aa).

Positions 91, 127, and 152 each coordinate a divalent metal cation.

This sequence belongs to the metallo-dependent hydrolases superfamily. TatD-type hydrolase family. TatD subfamily. In terms of assembly, monomer. The cofactor is Mg(2+).

The protein localises to the cytoplasm. Its function is as follows. 3'-5' exonuclease that prefers single-stranded DNA and RNA. May play a role in the H(2)O(2)-induced DNA damage repair. The chain is 3'-5' ssDNA/RNA exonuclease TatD from Klebsiella pneumoniae (strain 342).